A 371-amino-acid chain; its full sequence is T-cell acute lymphocytic leukemia protein 1 (371 aa).

Residues 1–71 (MMEKRQPELC…DVPLQNSSNG (71 aa)) are disordered. The segment covering 34–57 (GCKEDEESKREEGDKEGGGRFKGD) has biased composition (basic and acidic residues). The bHLH domain maps to 204 to 256 (VRRIFTNSRERWRQQNVNGAFAELRKLIPTHPPDKKLSKNEILRLAMKYISFL). The disordered stretch occupies residues 263–371 (QDGGRNVSST…GRPLDGSSRR (109 aa)). A compositionally biased stretch (basic and acidic residues) spans 293–305 (HQDRVVGLARDDI). Acidic residues predominate over residues 321–335 (GDADGSPESFMEDQD).

As to expression, expressed in the main hemopoietic organs in adults, namely the kidney and the spleen. Also expressed in the liver, brain, gill and gonads.

The protein localises to the nucleus. In terms of biological role, transcription factor that plays a pivotal role in hemopoietic and endothelial development. The polypeptide is T-cell acute lymphocytic leukemia protein 1 (Takifugu rubripes (Japanese pufferfish)).